Here is a 157-residue protein sequence, read N- to C-terminus: Small ribosomal subunit protein uS7 (157 aa).

The protein belongs to the universal ribosomal protein uS7 family. In terms of assembly, part of the 30S ribosomal subunit. Contacts proteins S9 and S11.

Its function is as follows. One of the primary rRNA binding proteins, it binds directly to 16S rRNA where it nucleates assembly of the head domain of the 30S subunit. Is located at the subunit interface close to the decoding center, probably blocks exit of the E-site tRNA. The protein is Small ribosomal subunit protein uS7 of Roseiflexus sp. (strain RS-1).